Here is a 1025-residue protein sequence, read N- to C-terminus: Putative receptor-like protein kinase At3g47110 (1025 aa).

The N-terminal stretch at 1–30 (MGVPCIVMRLILVSALLVSVSLEHSDMVCA) is a signal peptide. The Extracellular segment spans residues 31-653 (QTIRLTEETD…LPRRHSSVRK (623 aa)). 2 N-linked (GlcNAc...) asparagine glycosylation sites follow: Asn63 and Asn103. 10 LRR repeats span residues 104–128 (LSFLRSLNLADNFFHGAIPSEVGNL), 130–151 (RLQYLNMSNNLFGGVIPVVLSN), 152–175 (CSSLSTLDLSSNHLEQGVPLEFGS), 176–200 (LSKLVLLSLGRNNLTGKFPASLGNL), 202–224 (SLQMLDFIYNQIEGEIPGDIARL), 226–248 (QMIFFRIALNKFNGVFPPPIYNL), 249–271 (SSLIFLSITGNSFSGTLRPDFGS), 273–297 (LPNLQILYMGINSFTGTIPETLSNI), 298–323 (SSLRQLDIPSNHLTGKIPLSFGRLQN), and 325–344 (LLLGLNNNSLGNYSSGDLDF). Residues Asn135 and Asn151 are each glycosylated (N-linked (GlcNAc...) asparagine). N-linked (GlcNAc...) asparagine glycans are attached at residues Asn188 and Asn199. Asn247 carries N-linked (GlcNAc...) asparagine glycosylation. N-linked (GlcNAc...) asparagine glycosylation occurs at Asn296. Residues Asn331, Asn336, Asn350, and Asn374 are each glycosylated (N-linked (GlcNAc...) asparagine). LRR repeat units lie at residues 351–374 (CSQLQYLNVGFNKLGGQLPVFIAN), 376–400 (STQLTELSLGGNLISGSIPHGIGNL), 401–424 (VSLQTLDLGENLLTGKLPPSLGEL), 426–448 (ELRKVLLYSNGLSGEIPSSLGNI), 449–472 (SGLTYLYLLNNSFEGSIPSSLGSC), 473–496 (SYLLDLNLGTNKLNGSIPHELMEL), 498–520 (SLVVLNVSFNLLVGPLRQDIGKL), 521–544 (KFLLALDVSYNKLSGQIPQTLANC), 546–567 (SLEFLLLQGNSFVGPIPDIRGL), 568–593 (TGLRFLDLSKNNLSGTIPEYMANFSK), and 595–616 (QNLNLSLNNFDGAVPTEGVFRN). N-linked (GlcNAc...) asparagine glycans are attached at residues Asn447, Asn458, Asn486, and Asn503. 4 N-linked (GlcNAc...) asparagine glycosylation sites follow: Asn579, Asn590, Asn598, and Asn616. A helical membrane pass occupies residues 654-674 (IITICVSAVMAALLLLCLCVV). At 675–1025 (YLCWYKLRVK…RESFFRDEET (351 aa)) the chain is on the cytoplasmic side. Position 716 is a phosphothreonine (Thr716). A Protein kinase domain is found at 719–1020 (FSSSNLIGSG…KLVSIRESFF (302 aa)). ATP is bound by residues 725 to 733 (IGSGNFGAV) and Lys748. Phosphotyrosine occurs at positions 798 and 843. The active-site Proton acceptor is Asp856. Position 904 is a phosphotyrosine (Tyr904).

Belongs to the protein kinase superfamily. Ser/Thr protein kinase family.

The protein localises to the cell membrane. The enzyme catalyses L-seryl-[protein] + ATP = O-phospho-L-seryl-[protein] + ADP + H(+). It carries out the reaction L-threonyl-[protein] + ATP = O-phospho-L-threonyl-[protein] + ADP + H(+). In Arabidopsis thaliana (Mouse-ear cress), this protein is Putative receptor-like protein kinase At3g47110.